Here is a 300-residue protein sequence, read N- to C-terminus: Light-independent protochlorophyllide reductase iron-sulfur ATP-binding protein (300 aa).

ATP-binding positions include 10–15 (GIGKST) and Lys39. Mg(2+) is bound at residue Ser14. Cys95 and Cys129 together coordinate [4Fe-4S] cluster. ATP is bound at residue 180–181 (NR).

Belongs to the NifH/BchL/ChlL family. Homodimer. Protochlorophyllide reductase is composed of three subunits; ChlL, ChlN and ChlB. [4Fe-4S] cluster is required as a cofactor.

The protein localises to the plastid. The protein resides in the chloroplast. It catalyses the reaction chlorophyllide a + oxidized 2[4Fe-4S]-[ferredoxin] + 2 ADP + 2 phosphate = protochlorophyllide a + reduced 2[4Fe-4S]-[ferredoxin] + 2 ATP + 2 H2O. The protein operates within porphyrin-containing compound metabolism; chlorophyll biosynthesis (light-independent). Its function is as follows. Component of the dark-operative protochlorophyllide reductase (DPOR) that uses Mg-ATP and reduced ferredoxin to reduce ring D of protochlorophyllide (Pchlide) to form chlorophyllide a (Chlide). This reaction is light-independent. The L component serves as a unique electron donor to the NB-component of the complex, and binds Mg-ATP. In Auxenochlorella protothecoides (Green microalga), this protein is Light-independent protochlorophyllide reductase iron-sulfur ATP-binding protein.